Here is a 660-residue protein sequence, read N- to C-terminus: MGSSSLLLFPSSSSSATHSSYSPSSSSHAITSLLPPLPSDHHLLLYLDHQEQHHLAAAMVRKRPASDMDLPPPRRHVTGDLSDVTAAAAGAPTLSASAQLPALPTQLPAFHHTDMDLAAPAPPAPQQVAAGEGGPPSTAWVDGIIRDIIASSGAAVSVAQLIHNVREIIRPCNPDLASILELRLRSLLNSDPAPPPPPPSHPALLPPDATAPPPPPTSVAALPPPPPAQPDKRRREPQCQEQEPNQPQSPKPPTAEETAAAAAAAAAAAAAAAKERKEEQRRKQRDEEGLHLLTLLLQCAESVNADNLDEAHRALLEIAELATPFGTSTQRVAAYFAEAMSARLVSSCLGLYAPLPSPSPAGARVHGRVAAAFQVFNGISPFVKFSHFTANQAIQEAFEREERVHIIDLDIMQGLQWPGLFHILASRPGGPPRVRLTGLGASMEALEATGKRLSDFADTLGLPFEFCPVADKAGNLDPEKLGVTRREAVAVHWLRHSLYDVTGSDSNTLWLIQRLAPKVVTMVEQDLSHSGSFLARFVEAIHYYSALFDSLDASYSEDSPERHVVEQQLLSREIRNVLAVGGPARTGDVKFGSWREKLAQSGFRVSSLAGSAAAQAALLLGMFPSDGYTLIEENGALKLGWKDLCLLTASAWRPIQASGR.

2 disordered regions span residues 1 to 33 (MGSS…ITSL) and 190 to 286 (SDPA…KQRD). A compositionally biased stretch (pro residues) spans 192 to 229 (PAPPPPPPSHPALLPPDATAPPPPPTSVAALPPPPPAQ). Residues 259–272 (AAAAAAAAAAAAAA) show a composition bias toward low complexity. A coiled-coil region spans residues 262 to 289 (AAAAAAAAAAAAKERKEEQRRKQRDEEG). The segment covering 273–286 (AKERKEEQRRKQRD) has biased composition (basic and acidic residues). The 371-residue stretch at 283 to 653 (KQRDEEGLHL…LCLLTASAWR (371 aa)) folds into the GRAS domain. Residues 290–354 (LHLLTLLLQC…VSSCLGLYAP (65 aa)) form a leucine repeat I (LRI) region. Positions 297–301 (LQCAE) match the LxCxE motif motif. Residues 373–438 (FQVFNGISPF…GGPPRVRLTG (66 aa)) are VHIID. Positions 404–408 (VHIID) match the VHIID motif. Residues 448-480 (ATGKRLSDFADTLGLPFEFCPVADKAGNLDPEK) form a leucine repeat II (LRII) region. The tract at residues 489 to 576 (VAVHWLRHSL…QQLLSREIRN (88 aa)) is PFYRE. The segment at 579–653 (AVGGPARTGD…LCLLTASAWR (75 aa)) is SAW.

It belongs to the GRAS family.

Its subcellular location is the cytoplasm. In terms of biological role, probable transcription factor involved in asmmetric cell division in the cortex/endodermis progenitor cell and in the process of stomata and ligule formation in leaves. The chain is Protein SCARECROW 2 (SCR2) from Oryza sativa subsp. indica (Rice).